Here is a 214-residue protein sequence, read N- to C-terminus: Urease accessory protein UreG (214 aa).

23–30 (GPVGSGKT) lines the GTP pocket.

It belongs to the SIMIBI class G3E GTPase family. UreG subfamily. In terms of assembly, homodimer. UreD, UreF and UreG form a complex that acts as a GTP-hydrolysis-dependent molecular chaperone, activating the urease apoprotein by helping to assemble the nickel containing metallocenter of UreC. The UreE protein probably delivers the nickel.

Its subcellular location is the cytoplasm. Facilitates the functional incorporation of the urease nickel metallocenter. This process requires GTP hydrolysis, probably effectuated by UreG. The polypeptide is Urease accessory protein UreG (Bordetella pertussis (strain Tohama I / ATCC BAA-589 / NCTC 13251)).